The chain runs to 466 residues: Reticulophagy regulator 3 (466 aa).

The disordered stretch occupies residues 1–28; it reads MAEAEGVPTTPGPASGSTFRGRRDVSGS. Alanine 2 carries the post-translational modification N-acetylalanine. Over 2 to 80 the chain is Cytoplasmic; that stretch reads AEAEGVPTTP…WCLGLNAAFW (79 aa). Threonine 10 carries the phosphothreonine modification. A Phosphoserine modification is found at serine 26. A helical membrane pass occupies residues 81 to 101; sequence FFALTSLRLVFLLAFGLMIIV. Residues 102–163 lie on the Lumenal side of the membrane; the sequence is CIDQWKNKIW…FIRNVLLFKK (62 aa). A helical membrane pass occupies residues 164 to 184; the sequence is QNPGKFCLLSCGILTFLAVLG. The Cytoplasmic segment spans residues 185–186; that stretch reads RY. Residues 187 to 207 traverse the membrane as a helical segment; sequence VPGLLLSYLMLVTVMMWPLAV. Residues 208–381 lie on the Lumenal side of the membrane; that stretch reads YHRLWDRAYV…ASRDEAALPE (174 aa). Phosphoserine occurs at positions 258 and 260. Position 283 is a phosphothreonine (threonine 283). The disordered stretch occupies residues 284 to 374; the sequence is DSEHSDAEVS…EEPQAPPASR (91 aa). Residues serine 285, serine 288, serine 293, and serine 303 each carry the phosphoserine modification. Positions 294-310 are enriched in polar residues; it reads CTDNGTFNLSRGQTPLT. 2 positions are modified to phosphothreonine: threonine 307 and threonine 310. A phosphoserine mark is found at serine 313, serine 320, and serine 360. The segment covering 316-331 has biased composition (basic and acidic residues); the sequence is LDGHSDPEESFARDLP. A helical transmembrane segment spans residues 382–402; sequence LLLGALPVGSNLTSNLASLVS. The Cytoplasmic portion of the chain corresponds to 403-466; it reads QGMIQLALSG…QLDPASSRSH (64 aa). A disordered region spans residues 412–466; it reads GASQPGPSGAPAQRATRGFLRSPSSDLDTDAEGDDFELLDQSELSQLDPASSRSH. Acidic residues predominate over residues 438–451; the sequence is LDTDAEGDDFELLD. Threonine 440 is modified (phosphothreonine). The short motif at 445 to 450 is the LIR motif element; that stretch reads DDFELL. Residues 453–466 show a composition bias toward polar residues; it reads SELSQLDPASSRSH.

Belongs to the RETREG family. As to quaternary structure, interacts with ATG8 family modifier proteins MAP1LC3A, MAP1LC3B, MAP1LC3C, GABARAP, GABARAPL1 and GABARAPL2. Interacts with CANX. Interacts with RTN4 isoform B.

It localises to the endoplasmic reticulum membrane. Endoplasmic reticulum (ER)-anchored autophagy regulator which exists in an inactive state under basal conditions but is activated following cellular stress. When activated, induces ER fragmentation and mediates ER delivery into lysosomes through sequestration into autophagosomes via interaction with ATG8 family proteins. Promotes ER membrane curvature and ER tubulation required for subsequent ER fragmentation and engulfment into autophagosomes. Required for collagen quality control in a LIR motif-dependent manner. Mediates NRF1-enhanced neurite outgrowth. The chain is Reticulophagy regulator 3 from Homo sapiens (Human).